A 606-amino-acid chain; its full sequence is NADH-ubiquinone oxidoreductase chain 5 (606 aa).

The next 16 helical transmembrane spans lie at 3–23, 35–55, 87–107, 117–137, 140–160, 171–191, 211–233, 241–261, 273–293, 301–320, 325–347, 366–386, 402–422, 457–477, 488–508, and 582–602; these read LFTS…LMSL, YVKT…LIFI, MIFT…SMWY, FFKY…ANNL, LFIG…WWYG, AILY…WFLF, LPLL…HPWL, TPVS…FLLI, MQTL…ICAL, IIAF…IGIN, AFLH…GSII, LPFT…TPFL, SYTN…TAVY, LLIG…PMTI, LTAL…SLMT, and GLIK…MLLF.

It belongs to the complex I subunit 5 family. Core subunit of respiratory chain NADH dehydrogenase (Complex I) which is composed of 45 different subunits.

The protein localises to the mitochondrion inner membrane. The catalysed reaction is a ubiquinone + NADH + 5 H(+)(in) = a ubiquinol + NAD(+) + 4 H(+)(out). Its function is as follows. Core subunit of the mitochondrial membrane respiratory chain NADH dehydrogenase (Complex I) which catalyzes electron transfer from NADH through the respiratory chain, using ubiquinone as an electron acceptor. Essential for the catalytic activity and assembly of complex I. The protein is NADH-ubiquinone oxidoreductase chain 5 (MT-ND5) of Pseudosoriculus fumidus (Taiwanese brown-toothed shrew).